A 312-amino-acid polypeptide reads, in one-letter code: Ribonuclease Z (312 aa).

Zn(2+) is bound by residues histidine 62, histidine 64, aspartate 66, histidine 67, histidine 144, aspartate 215, and histidine 273. The active-site Proton acceptor is aspartate 66.

It belongs to the RNase Z family. In terms of assembly, homodimer. It depends on Zn(2+) as a cofactor.

It catalyses the reaction Endonucleolytic cleavage of RNA, removing extra 3' nucleotides from tRNA precursor, generating 3' termini of tRNAs. A 3'-hydroxy group is left at the tRNA terminus and a 5'-phosphoryl group is left at the trailer molecule.. Zinc phosphodiesterase, which displays some tRNA 3'-processing endonuclease activity. Probably involved in tRNA maturation, by removing a 3'-trailer from precursor tRNA. The chain is Ribonuclease Z from Prochlorococcus marinus (strain MIT 9301).